We begin with the raw amino-acid sequence, 490 residues long: Costunolide synthase (490 aa).

Residues 3–23 traverse the membrane as a helical; Signal-anchor for type II membrane protein segment; the sequence is PLTIVSLAVASFLLFAFWALS. 2 N-linked (GlcNAc...) asparagine glycosylation sites follow: Asn167 and Asn255. Residue Cys432 participates in heme binding.

This sequence belongs to the cytochrome P450 family. Heme is required as a cofactor.

Its subcellular location is the membrane. It catalyses the reaction germacra-1(10),4,11(13)-trien-12-oate + reduced [NADPH--hemoprotein reductase] + O2 = (+)-costunolide + oxidized [NADPH--hemoprotein reductase] + 2 H2O. The protein operates within secondary metabolite biosynthesis; terpenoid biosynthesis. Functionally, involved in the biosynthesis of germacrene-derived sesquiterpene lactones. Component of the parthenolide biosynthetic pathway; parthenolide and conjugates are promising anti-cancer drugs highly active against colon cancer cells. Hydroxylates germacrene A acid to 6-alpha-hydroxy-germacrne A acid, a precursor of sesquiterpene lactones that spontaneously undergoes a lactonization which yields costunolide. This chain is Costunolide synthase, found in Lactuca sativa (Garden lettuce).